Reading from the N-terminus, the 306-residue chain is Serine/threonine-protein phosphatase PP2A-1 catalytic subunit (306 aa).

Asp54, His56, Asp82, and Asn114 together coordinate Mn(2+). The active-site Proton donor is His115. The Mn(2+) site is built by His164 and His238.

This sequence belongs to the PPP phosphatase family. PP-2A subfamily. Mn(2+) serves as cofactor.

The protein localises to the cytoplasm. The enzyme catalyses O-phospho-L-seryl-[protein] + H2O = L-seryl-[protein] + phosphate. It carries out the reaction O-phospho-L-threonyl-[protein] + H2O = L-threonyl-[protein] + phosphate. This Oryza sativa subsp. indica (Rice) protein is Serine/threonine-protein phosphatase PP2A-1 catalytic subunit (PP2A1).